A 100-amino-acid chain; its full sequence is Colipase-like protein 2 (100 aa).

The signal sequence occupies residues 1 to 21; sequence MAAALALVAGVLSGAVLPLWS. Disulfide bonds link Cys34–Cys45, Cys40–Cys56, Cys44–Cys78, Cys66–Cys86, and Cys80–Cys97.

The protein belongs to the colipase family.

It is found in the secreted. The protein is Colipase-like protein 2 (CLPSL2) of Homo sapiens (Human).